The sequence spans 354 residues: Uroporphyrinogen decarboxylase (354 aa).

Substrate is bound by residues 25 to 29, F44, D75, Y152, T207, and H330; that span reads RQAGR.

Belongs to the uroporphyrinogen decarboxylase family. As to quaternary structure, homodimer.

Its subcellular location is the cytoplasm. It catalyses the reaction uroporphyrinogen III + 4 H(+) = coproporphyrinogen III + 4 CO2. It functions in the pathway porphyrin-containing compound metabolism; protoporphyrin-IX biosynthesis; coproporphyrinogen-III from 5-aminolevulinate: step 4/4. Functionally, catalyzes the decarboxylation of four acetate groups of uroporphyrinogen-III to yield coproporphyrinogen-III. The protein is Uroporphyrinogen decarboxylase of Xylella fastidiosa (strain Temecula1 / ATCC 700964).